A 77-amino-acid chain; its full sequence is Immune protein Tis1 (77 aa).

Its function is as follows. Immunity protein that plays a role in preventing early activation of toxin Tas1. This chain is Immune protein Tis1 (tis1), found in Pseudomonas aeruginosa (strain UCBPP-PA14).